We begin with the raw amino-acid sequence, 453 residues long: Insulinoma-associated protein 1b (453 aa).

An SNAG domain region spans residues 1 to 20 (MPKGFLVKRNKKAALVSYRI). The segment at 140–179 (NSNRSGTASGAHAPAIQTGAKRPSADAAERKVSSKSAKKP) is disordered. Residues 162–171 (PSADAAERKV) are compositionally biased toward basic and acidic residues. Residues 252-274 (YRCPECEKVFSCPANLASHRRWH) form a C2H2-type 1 zinc finger. The tract at residues 298-318 (AEFPSDRDTPSPGLSESGSED) is disordered. 3 C2H2-type zinc fingers span residues 321 to 343 (YDCQ…ILGH), 383 to 406 (LTCP…RLLH), and 412 to 435 (FPCK…NKCH).

This sequence belongs to the INSM1 family.

It localises to the nucleus. In terms of biological role, may act as a transcriptional regulator. May play a role in neurogenesis and neuroendocrine cell differentiation during embryonic development. The polypeptide is Insulinoma-associated protein 1b (insm1b) (Danio rerio (Zebrafish)).